The following is a 543-amino-acid chain: CTP synthase (543 aa).

Residues 1 to 265 (MTRYIFVTGG…DDIVVERFGL (265 aa)) form an amidoligase domain region. A CTP-binding site is contributed by Ser13. Ser13 is a binding site for UTP. Residues 14 to 19 (SLGKGI) and Asp71 contribute to the ATP site. Mg(2+) is bound by residues Asp71 and Glu139. CTP is bound by residues 146-148 (DIE), 186-191 (KTKPTQ), and Lys222. UTP is bound by residues 186 to 191 (KTKPTQ) and Lys222. In terms of domain architecture, Glutamine amidotransferase type-1 spans 290–541 (TIAMVGKYME…VNAALAQKAR (252 aa)). Gly351 provides a ligand contact to L-glutamine. The active-site Nucleophile; for glutamine hydrolysis is the Cys378. L-glutamine is bound by residues 379 to 382 (LGMQ), Glu402, and Arg469. Catalysis depends on residues His514 and Glu516.

This sequence belongs to the CTP synthase family. In terms of assembly, homotetramer.

It carries out the reaction UTP + L-glutamine + ATP + H2O = CTP + L-glutamate + ADP + phosphate + 2 H(+). It catalyses the reaction L-glutamine + H2O = L-glutamate + NH4(+). The catalysed reaction is UTP + NH4(+) + ATP = CTP + ADP + phosphate + 2 H(+). The protein operates within pyrimidine metabolism; CTP biosynthesis via de novo pathway; CTP from UDP: step 2/2. With respect to regulation, allosterically activated by GTP, when glutamine is the substrate; GTP has no effect on the reaction when ammonia is the substrate. The allosteric effector GTP functions by stabilizing the protein conformation that binds the tetrahedral intermediate(s) formed during glutamine hydrolysis. Inhibited by the product CTP, via allosteric rather than competitive inhibition. Functionally, catalyzes the ATP-dependent amination of UTP to CTP with either L-glutamine or ammonia as the source of nitrogen. Regulates intracellular CTP levels through interactions with the four ribonucleotide triphosphates. The chain is CTP synthase from Azotobacter vinelandii (strain DJ / ATCC BAA-1303).